Here is a 651-residue protein sequence, read N- to C-terminus: Protein RcaC (651 aa).

In terms of domain architecture, Response regulatory 1 spans 2–116 (KILLVEDDDV…ELIARIRALL (115 aa)). The residue at position 51 (Asp51) is a 4-aspartylphosphate. A DNA-binding region (ompR/PhoB-type) is located at residues 124 to 223 (FPLLTWGDLL…MHGRGYYLKA (100 aa)). 2 Response regulatory domains span residues 384–519 (LLLM…VNLL) and 527–643 (KVMI…LRRL).

Functionally, required for chromatic adaptation. Thought to be a positive regulator of phycobiliproteins. The protein is Protein RcaC (rcaC) of Microchaete diplosiphon (Fremyella diplosiphon).